The sequence spans 183 residues: Ferritin heavy polypeptide-like 17 (183 aa).

One can recognise a Ferritin-like diiron domain in the interval 11–160; it reads QKYDTNCDAA…GYVSNLRKIC (150 aa). Positions 28, 66, 108, and 142 each coordinate Fe cation.

This sequence belongs to the ferritin family. In terms of tissue distribution, testis specific. Also expressed in several cancers.

In Homo sapiens (Human), this protein is Ferritin heavy polypeptide-like 17 (FTHL17).